The chain runs to 270 residues: 3-methyl-2-oxobutanoate hydroxymethyltransferase (270 aa).

Residues Asp50 and Asp89 each contribute to the Mg(2+) site. 3-methyl-2-oxobutanoate contacts are provided by residues 50–51 (DS), Asp89, and Lys118. Position 120 (Glu120) interacts with Mg(2+). The Proton acceptor role is filled by Glu187.

This sequence belongs to the PanB family. In terms of assembly, homodecamer; pentamer of dimers. Mg(2+) is required as a cofactor.

The protein localises to the cytoplasm. It carries out the reaction 3-methyl-2-oxobutanoate + (6R)-5,10-methylene-5,6,7,8-tetrahydrofolate + H2O = 2-dehydropantoate + (6S)-5,6,7,8-tetrahydrofolate. It functions in the pathway cofactor biosynthesis; (R)-pantothenate biosynthesis; (R)-pantoate from 3-methyl-2-oxobutanoate: step 1/2. Functionally, catalyzes the reversible reaction in which hydroxymethyl group from 5,10-methylenetetrahydrofolate is transferred onto alpha-ketoisovalerate to form ketopantoate. The sequence is that of 3-methyl-2-oxobutanoate hydroxymethyltransferase from Helicobacter pylori (strain HPAG1).